A 314-amino-acid polypeptide reads, in one-letter code: Putative S-adenosyl-L-methionine-dependent methyltransferase MUL_4402 (314 aa).

S-adenosyl-L-methionine-binding positions include Asp-132 and 161 to 162; that span reads DL. Positions 291–314 are disordered; sequence RPVPDDAEGPVPPTLFVSAHRPAA.

It belongs to the UPF0677 family.

Functionally, exhibits S-adenosyl-L-methionine-dependent methyltransferase activity. This is Putative S-adenosyl-L-methionine-dependent methyltransferase MUL_4402 from Mycobacterium ulcerans (strain Agy99).